The sequence spans 41 residues: MDSMANTVSSSVVNTGNKPSETLNKTVKNYTPKVPYMCVIA.

The tract at residues M1–K25 is disordered. Residues M1 to N29 constitute a propeptide that is removed on maturation. C38 carries the cysteine methyl ester modification. C38 carries S-farnesyl cysteine lipidation. Residues V39–A41 constitute a propeptide, removed in mature form.

The protein localises to the secreted. M-factor is a mating pheromone produced by M-type mating cells. All three mfm genes contribute to the production of M-factor. The sequence is that of M-factor (mfm3) from Schizosaccharomyces pombe (strain 972 / ATCC 24843) (Fission yeast).